Reading from the N-terminus, the 339-residue chain is Phenylalanine--tRNA ligase alpha subunit (339 aa).

Glutamate 254 serves as a coordination point for Mg(2+).

The protein belongs to the class-II aminoacyl-tRNA synthetase family. Phe-tRNA synthetase alpha subunit type 1 subfamily. In terms of assembly, tetramer of two alpha and two beta subunits. It depends on Mg(2+) as a cofactor.

The protein resides in the cytoplasm. It carries out the reaction tRNA(Phe) + L-phenylalanine + ATP = L-phenylalanyl-tRNA(Phe) + AMP + diphosphate + H(+). The chain is Phenylalanine--tRNA ligase alpha subunit from Dictyoglomus thermophilum (strain ATCC 35947 / DSM 3960 / H-6-12).